Consider the following 283-residue polypeptide: Bifunctional protein FolD (283 aa).

NADP(+)-binding positions include 166-168 (GAS) and Ile-232.

It belongs to the tetrahydrofolate dehydrogenase/cyclohydrolase family. As to quaternary structure, homodimer.

It carries out the reaction (6R)-5,10-methylene-5,6,7,8-tetrahydrofolate + NADP(+) = (6R)-5,10-methenyltetrahydrofolate + NADPH. The catalysed reaction is (6R)-5,10-methenyltetrahydrofolate + H2O = (6R)-10-formyltetrahydrofolate + H(+). It participates in one-carbon metabolism; tetrahydrofolate interconversion. Functionally, catalyzes the oxidation of 5,10-methylenetetrahydrofolate to 5,10-methenyltetrahydrofolate and then the hydrolysis of 5,10-methenyltetrahydrofolate to 10-formyltetrahydrofolate. This Wigglesworthia glossinidia brevipalpis protein is Bifunctional protein FolD.